A 277-amino-acid polypeptide reads, in one-letter code: Diaminopimelate epimerase (277 aa).

Residues Asn11 and Asn72 each contribute to the substrate site. Catalysis depends on Cys81, which acts as the Proton donor. Residues 82–83, Asn189, and 207–208 contribute to the substrate site; these read GN and ER. The active-site Proton acceptor is the Cys217. 218-219 provides a ligand contact to substrate; sequence GT.

Belongs to the diaminopimelate epimerase family. As to quaternary structure, homodimer.

The protein resides in the cytoplasm. The catalysed reaction is (2S,6S)-2,6-diaminopimelate = meso-2,6-diaminopimelate. It participates in amino-acid biosynthesis; L-lysine biosynthesis via DAP pathway; DL-2,6-diaminopimelate from LL-2,6-diaminopimelate: step 1/1. Functionally, catalyzes the stereoinversion of LL-2,6-diaminopimelate (L,L-DAP) to meso-diaminopimelate (meso-DAP), a precursor of L-lysine and an essential component of the bacterial peptidoglycan. This chain is Diaminopimelate epimerase, found in Hydrogenobaculum sp. (strain Y04AAS1).